The primary structure comprises 910 residues: DNA mismatch repair protein MutS (910 aa).

Residues 1–11 show a composition bias toward basic and acidic residues; it reads MEAKVEEKEPE. Residues 1–21 form a disordered region; it reads MEAKVEEKEPEPVENAGPDAP. Residue 658–665 participates in ATP binding; the sequence is GPNMGGKS.

Belongs to the DNA mismatch repair MutS family.

This protein is involved in the repair of mismatches in DNA. It is possible that it carries out the mismatch recognition step. This protein has a weak ATPase activity. This Brucella suis (strain ATCC 23445 / NCTC 10510) protein is DNA mismatch repair protein MutS.